A 33-amino-acid chain; its full sequence is Rugosin-B (33 aa).

The cysteines at positions 27 and 33 are disulfide-linked.

This sequence belongs to the frog skin active peptide (FSAP) family. Brevinin subfamily. As to expression, expressed by the skin glands.

The protein resides in the secreted. Shows antibacterial activity against both Gram-negative and Gram-positive bacteria. The sequence is that of Rugosin-B from Glandirana rugosa (Japanese wrinkled frog).